We begin with the raw amino-acid sequence, 923 residues long: Protocadherin gamma-B4 (923 aa).

A signal peptide spans 1 to 30 (MGSGAGELGRAERLPVLFLFLLSLFCPALC). 6 Cadherin domains span residues 31–133 (EQIR…TPKF), 134–242 (TQNS…APVF), 243–345 (SQDI…APEV), 346–450 (IFQS…APVF), 451–560 (SQSS…APRV), and 568–673 (DGSA…LPDI). Over 31–689 (EQIRYRIPEE…SDLEAELQFY (659 aa)) the chain is Extracellular. N-linked (GlcNAc...) asparagine glycans are attached at residues asparagine 417 and asparagine 543. A helical transmembrane segment spans residues 690 to 710 (LVVALALISVLFLVAMILAIA). Residues 711 to 923 (LRLRRSSSPA…KKKSGKKEKK (213 aa)) are Cytoplasmic-facing. Disordered stretches follow at residues 797 to 832 (SHQQ…WPNN) and 893 to 923 (ATLT…KEKK). Residues 913–923 (NKKKSGKKEKK) are compositionally biased toward basic residues.

The protein localises to the cell membrane. Potential calcium-dependent cell-adhesion protein. May be involved in the establishment and maintenance of specific neuronal connections in the brain. This is Protocadherin gamma-B4 (PCDHGB4) from Pan troglodytes (Chimpanzee).